A 1075-amino-acid chain; its full sequence is Protein EXPORTIN 1A (1075 aa).

Positions 37-103 constitute an Importin N-terminal domain; that stretch reads ADQILRDLQA…KNYISEVIVQ (67 aa). HEAT repeat units lie at residues 91–130, 135–171, 232–267, 336–373, 388–425, 474–513, 563–600, 612–649, 682–719, 756–793, 798–835, and 894–934; these read DGMKNYISEVIVQLSSNEASFRSERLYVNKLNVILVQIVK, AKWTSFIPDLVAAAKTSETICENCMAILKLLSEEVFD, IFESTLLETLLKFFPVPAYRNLTIQCLTEVAALNFG, SLLLAGLEYLINISYVDDTEVFKVCLDYWNSLVLELFD, MGLQPFLPGMVDGLGSQVMQRRQLYSHPMSKLRGLMIN, DTEKQMLRKLNKQLSGEEWAWNNLNTLCWAIGSISGSMAE, KFLKTVVNKLFEFMHETHPGVQDMACDTFLKIVQKCKR, PFVSELLTGLATTVQDLEPHQIHSFYESVGNMIQAESD, LKDQVVIRTVLNILQTNTSAATSLGTYFLSQISLIFLD, RETLKLIETFLDKAEDQPHIGKQFVPPMMESVLGDYAR, ARESEVLSLFATIINKYKATMLDDVPHIFEAVFQCTLE, and ETGL…VLTD.

The protein belongs to the exportin family. As to quaternary structure, interacts with RAN1. In terms of tissue distribution, expressed ubiquitously, with higher levels in stems, inflorescences and roots. Present in mature pollen grains, unpollinated pistils, and 2-week-old seedlings.

It localises to the nucleus. It is found in the nuclear pore complex. The protein localises to the nucleus membrane. In terms of biological role, receptor for the leucine-rich nuclear export signal (NES). Binds cooperatively to the NES on its target protein and to the small GTPase Ran in its active GTP-bound form. Required for the maternal-to-embryonic transition and during gametophyte development. Involved in heat-induced oxidative stress basal resistance. The protein is Protein EXPORTIN 1A of Arabidopsis thaliana (Mouse-ear cress).